Consider the following 1956-residue polypeptide: Histone-lysine N-methyltransferase SETD1B (1956 aa).

Over residues 1-20 the composition is skewed to basic and acidic residues; it reads MSFKEAKPGERGKNPEDHGR. Residues 1 to 46 form a disordered region; the sequence is MSFKEAKPGERGKNPEDHGRKQTASWINGMEAGNQPSTSGEKKSHH. Positions 111-199 constitute an RRM domain; sequence DEFYVGPVPP…NIIHVELDTK (89 aa). Disordered regions lie at residues 226–478, 502–637, 662–696, 926–1148, 1341–1386, 1420–1464, 1512–1553, 1627–1655, and 1766–1790; these read LDAS…LEAE, IAGD…VTPS, GFPPLPPPPPPQPGFPMPPPLPPPPPPTHPSVTVP, KEPP…DEMQ, EDLP…TLTS, PTFP…VPSP, HLTS…NYET, TKHKKSRNSRHNNRYDEFSTVPSPEFSPP, and IDTQGKSIPAQPQASTRAGSERRSE. Polar residues-rich tracts occupy residues 254 to 290, 298 to 312, and 346 to 361; these read VTPNSSTPFSHDTAYSSSRQGTPNSYSQFTPQSQGTP, PFSQDSSYSSRQTTP, and SSGSYRGTEHTFNVTR. Residues 363 to 373 show a composition bias toward pro residues; the sequence is QPEPVQVPRTP. 3 stretches are compositionally biased toward polar residues: residues 375–407, 416–432, and 451–464; these read LSHSSGNYKSAFSPYQGNTVFPQTDESQYPQTS, GPQTSDSYSDAGCNSAS, and DSTTEQKASFSQTP. Low complexity predominate over residues 517–527; that stretch reads SPISSSSSQLS. 2 stretches are compositionally biased toward polar residues: residues 535–551 and 575–593; these read GSRYQDVTPSSRPSSTG and SLCQNSRSASPIDQINQSG. The segment covering 594–605 has biased composition (basic and acidic residues); the sequence is RKTESLDKKELV. The span at 625-634 shows a compositional bias: acidic residues; that stretch reads EDMEISDDEV. A compositionally biased stretch (acidic residues) spans 986–1000; it reads SEGEEEVESEGDDGE. Over residues 1001–1011 the composition is skewed to basic and acidic residues; the sequence is TSDKEDSSSEK. Acidic residues predominate over residues 1068–1122; sequence DSSDESEESSEYESSSDSDEKEEEDDEEEELVFGDDQSEDQDLGQEYEVETDREE. The segment covering 1341–1352 has biased composition (basic and acidic residues); it reads EDLPRTPGRDIV. Polar residues-rich tracts occupy residues 1358-1367 and 1450-1462; these read LGKSQSTETV and EPTSASLTMNSVP. The span at 1541–1551 shows a compositional bias: basic and acidic residues; it reads SAHEFETEKNY. Over residues 1628-1638 the composition is skewed to basic residues; the sequence is KHKKSRNSRHN. Positions 1769-1783 are enriched in polar residues; that stretch reads QGKSIPAQPQASTRA. Positions 1788 to 1793 match the RxxxRR motif motif; that stretch reads RSEQRR. An SET domain is found at 1817 to 1934; that stretch reads KKLRFCKSHI…VNEEITYDYK (118 aa). An S-adenosyl-L-methionine-binding site is contributed by tyrosine 1933. Positions 1940–1956 constitute a Post-SET domain; that stretch reads VKIPCLCGAENCRGTLN.

This sequence belongs to the class V-like SAM-binding methyltransferase superfamily. Component of the SET1B/COMPASS complex.

The protein localises to the nucleus speckle. It localises to the chromosome. The enzyme catalyses L-lysyl(4)-[histone H3] + 3 S-adenosyl-L-methionine = N(6),N(6),N(6)-trimethyl-L-lysyl(4)-[histone H3] + 3 S-adenosyl-L-homocysteine + 3 H(+). Histone methyltransferase that specifically methylates 'Lys-4' of histone H3, when part of the SET1 histone methyltransferase (HMT) complex, but not if the neighboring 'Lys-9' residue is already methylated. H3 'Lys-4' methylation represents a specific tag for epigenetic transcriptional activation. The chain is Histone-lysine N-methyltransferase SETD1B (setd1b) from Xenopus tropicalis (Western clawed frog).